The primary structure comprises 356 residues: GTPase Obg (356 aa).

In terms of domain architecture, Obg spans 1–158 (MFIDSVKITL…RLVRLELKLI (158 aa)). The OBG-type G domain maps to 159–339 (ADVGLVGFPN…LKFMLLEEIK (181 aa)). GTP-binding positions include 165–172 (GFPNVGKS), 190–194 (FTTLT), 212–215 (DIPG), 280–283 (SKSD), and 320–322 (SSL). Mg(2+) contacts are provided by serine 172 and threonine 192.

This sequence belongs to the TRAFAC class OBG-HflX-like GTPase superfamily. OBG GTPase family. In terms of assembly, monomer. Mg(2+) is required as a cofactor.

The protein resides in the cytoplasm. An essential GTPase which binds GTP, GDP and possibly (p)ppGpp with moderate affinity, with high nucleotide exchange rates and a fairly low GTP hydrolysis rate. Plays a role in control of the cell cycle, stress response, ribosome biogenesis and in those bacteria that undergo differentiation, in morphogenesis control. The polypeptide is GTPase Obg (Campylobacter jejuni subsp. jejuni serotype O:23/36 (strain 81-176)).